The primary structure comprises 429 residues: Alanine aminotransferase (429 aa).

The L-alanine site is built by glycine 65 and asparagine 204. Lysine 265 is modified (N6-(pyridoxal phosphate)lysine). Arginine 403 contributes to the L-alanine binding site.

It belongs to the class-I pyridoxal-phosphate-dependent aminotransferase family. As to quaternary structure, homodimer. The cofactor is pyridoxal 5'-phosphate.

The protein resides in the cytoplasm. It carries out the reaction L-alanine + 2-oxoglutarate = pyruvate + L-glutamate. The chain is Alanine aminotransferase (aspC) from Mycobacterium bovis (strain ATCC BAA-935 / AF2122/97).